A 504-amino-acid chain; its full sequence is Ribosomal protein uS12 methylthiotransferase RimO (504 aa).

One can recognise an MTTase N-terminal domain in the interval 19–135 (KKVGFVSLGC…ILAASGIEPR (117 aa)). Positions 28, 64, 98, 214, 218, and 221 each coordinate [4Fe-4S] cluster. The Radical SAM core domain maps to 200-430 (ATPKYMAYIK…MSLQKQISKK (231 aa)). The region spanning 433-504 (KALIGREFDV…HDYDLVARLL (72 aa)) is the TRAM domain.

It belongs to the methylthiotransferase family. RimO subfamily. [4Fe-4S] cluster serves as cofactor.

The protein localises to the cytoplasm. It carries out the reaction L-aspartate(89)-[ribosomal protein uS12]-hydrogen + (sulfur carrier)-SH + AH2 + 2 S-adenosyl-L-methionine = 3-methylsulfanyl-L-aspartate(89)-[ribosomal protein uS12]-hydrogen + (sulfur carrier)-H + 5'-deoxyadenosine + L-methionine + A + S-adenosyl-L-homocysteine + 2 H(+). Catalyzes the methylthiolation of an aspartic acid residue of ribosomal protein uS12. The polypeptide is Ribosomal protein uS12 methylthiotransferase RimO (Koribacter versatilis (strain Ellin345)).